We begin with the raw amino-acid sequence, 159 residues long: Crossover junction endodeoxyribonuclease RuvC (159 aa).

Catalysis depends on residues D7, E66, and D139. Mg(2+) is bound by residues D7, E66, and D139.

It belongs to the RuvC family. In terms of assembly, homodimer which binds Holliday junction (HJ) DNA. The HJ becomes 2-fold symmetrical on binding to RuvC with unstacked arms; it has a different conformation from HJ DNA in complex with RuvA. In the full resolvosome a probable DNA-RuvA(4)-RuvB(12)-RuvC(2) complex forms which resolves the HJ. Mg(2+) serves as cofactor.

The protein resides in the cytoplasm. It carries out the reaction Endonucleolytic cleavage at a junction such as a reciprocal single-stranded crossover between two homologous DNA duplexes (Holliday junction).. Its function is as follows. The RuvA-RuvB-RuvC complex processes Holliday junction (HJ) DNA during genetic recombination and DNA repair. Endonuclease that resolves HJ intermediates. Cleaves cruciform DNA by making single-stranded nicks across the HJ at symmetrical positions within the homologous arms, yielding a 5'-phosphate and a 3'-hydroxyl group; requires a central core of homology in the junction. The consensus cleavage sequence is 5'-(A/T)TT(C/G)-3'. Cleavage occurs on the 3'-side of the TT dinucleotide at the point of strand exchange. HJ branch migration catalyzed by RuvA-RuvB allows RuvC to scan DNA until it finds its consensus sequence, where it cleaves and resolves the cruciform DNA. In Sulfurovum sp. (strain NBC37-1), this protein is Crossover junction endodeoxyribonuclease RuvC.